The chain runs to 98 residues: MEFEITSDTRNELLGRRELRFILTYDGATPSRKEIRGKLCALNNINENLVVLDSLRTGYGRMQLDGFMRIYDTEEGRQRTERSYLLNRGEPKKEEEEA.

The tract at residues Gly76–Ala98 is disordered. Residues Gly89 to Ala98 are compositionally biased toward basic and acidic residues.

Belongs to the eukaryotic ribosomal protein eS24 family.

This chain is Small ribosomal subunit protein eS24, found in Methanosphaerula palustris (strain ATCC BAA-1556 / DSM 19958 / E1-9c).